Here is a 349-residue protein sequence, read N- to C-terminus: S-adenosylmethionine:tRNA ribosyltransferase-isomerase (349 aa).

The protein belongs to the QueA family. As to quaternary structure, monomer.

The protein resides in the cytoplasm. The enzyme catalyses 7-aminomethyl-7-carbaguanosine(34) in tRNA + S-adenosyl-L-methionine = epoxyqueuosine(34) in tRNA + adenine + L-methionine + 2 H(+). The protein operates within tRNA modification; tRNA-queuosine biosynthesis. In terms of biological role, transfers and isomerizes the ribose moiety from AdoMet to the 7-aminomethyl group of 7-deazaguanine (preQ1-tRNA) to give epoxyqueuosine (oQ-tRNA). The polypeptide is S-adenosylmethionine:tRNA ribosyltransferase-isomerase (Pseudomonas fluorescens (strain SBW25)).